The following is a 925-amino-acid chain: Bifunctional imidazolonepropionase/histidine ammonia-lyase (925 aa).

Residues 1 to 414 form an imidazolonepropionase region; the sequence is MTKNSSTVFT…IKPHVRMEPF (414 aa). Fe(3+)-binding residues include histidine 73 and histidine 75. Residues histidine 73 and histidine 75 each contribute to the Zn(2+) site. 4-imidazolone-5-propanoate is bound by residues arginine 82, tyrosine 145, and histidine 178. Tyrosine 145 contacts N-formimidoyl-L-glutamate. A Fe(3+)-binding site is contributed by histidine 243. Histidine 243 provides a ligand contact to Zn(2+). Glutamine 246 provides a ligand contact to 4-imidazolone-5-propanoate. Aspartate 318 is a binding site for Fe(3+). Aspartate 318 contributes to the Zn(2+) binding site. N-formimidoyl-L-glutamate-binding residues include asparagine 320 and glycine 322. A 4-imidazolone-5-propanoate-binding site is contributed by threonine 323. The tract at residues 415-925 is histidine ammonia-lyase; it reads MTIILKPGSV…SAGILPDLEA (511 aa). The 5-imidazolinone (Ala-Gly) cross-link spans 556 to 558; the sequence is ASG. The residue at position 557 (serine 557) is a 2,3-didehydroalanine (Ser).

In the N-terminal section; belongs to the metallo-dependent hydrolases superfamily. HutI family. It in the C-terminal section; belongs to the PAL/histidase family. Zn(2+) serves as cofactor. Fe(3+) is required as a cofactor. In terms of processing, contains an active site 4-methylidene-imidazol-5-one (MIO), which is formed autocatalytically by cyclization and dehydration of residues Ala-Ser-Gly.

The protein resides in the cytoplasm. It catalyses the reaction 4-imidazolone-5-propanoate + H2O = N-formimidoyl-L-glutamate. It carries out the reaction L-histidine = trans-urocanate + NH4(+). The protein operates within amino-acid degradation; L-histidine degradation into L-glutamate; N-formimidoyl-L-glutamate from L-histidine: step 1/3. Its pathway is amino-acid degradation; L-histidine degradation into L-glutamate; N-formimidoyl-L-glutamate from L-histidine: step 3/3. In terms of biological role, catalyzes the hydrolytic cleavage of the carbon-nitrogen bond in imidazolone-5-propanoate to yield N-formimidoyl-L-glutamate. It is the third step in the universal histidine degradation pathway. The sequence is that of Bifunctional imidazolonepropionase/histidine ammonia-lyase (hutIH) from Brucella melitensis biotype 1 (strain ATCC 23456 / CCUG 17765 / NCTC 10094 / 16M).